The chain runs to 120 residues: Chaperonin GroEL (120 aa).

23-27 (DGTTT) is a binding site for ATP.

The protein belongs to the chaperonin (HSP60) family. Forms a cylinder of 14 subunits composed of two heptameric rings stacked back-to-back. Interacts with the co-chaperonin GroES.

Its subcellular location is the cytoplasm. The enzyme catalyses ATP + H2O + a folded polypeptide = ADP + phosphate + an unfolded polypeptide.. Its function is as follows. Together with its co-chaperonin GroES, plays an essential role in assisting protein folding. The GroEL-GroES system forms a nano-cage that allows encapsulation of the non-native substrate proteins and provides a physical environment optimized to promote and accelerate protein folding. This is Chaperonin GroEL from Mycobacterium shimoidei.